Here is a 472-residue protein sequence, read N- to C-terminus: 3-isopropylmalate dehydratase large subunit (472 aa).

[4Fe-4S] cluster is bound by residues Cys353, Cys414, and Cys417.

The protein belongs to the aconitase/IPM isomerase family. LeuC type 1 subfamily. Heterodimer of LeuC and LeuD. [4Fe-4S] cluster is required as a cofactor.

The catalysed reaction is (2R,3S)-3-isopropylmalate = (2S)-2-isopropylmalate. It participates in amino-acid biosynthesis; L-leucine biosynthesis; L-leucine from 3-methyl-2-oxobutanoate: step 2/4. In terms of biological role, catalyzes the isomerization between 2-isopropylmalate and 3-isopropylmalate, via the formation of 2-isopropylmaleate. The chain is 3-isopropylmalate dehydratase large subunit from Psychrobacter cryohalolentis (strain ATCC BAA-1226 / DSM 17306 / VKM B-2378 / K5).